The chain runs to 394 residues: Acetate kinase (394 aa).

Asn-8 provides a ligand contact to Mg(2+). An ATP-binding site is contributed by Lys-15. Arg-86 lines the substrate pocket. Residue Asp-143 is the Proton donor/acceptor of the active site. Residues 201–205 (HLGNG), 276–278 (DCR), and 324–328 (GIGEN) contribute to the ATP site. Glu-378 contacts Mg(2+).

It belongs to the acetokinase family. In terms of assembly, homodimer. Requires Mg(2+) as cofactor. It depends on Mn(2+) as a cofactor.

It is found in the cytoplasm. The catalysed reaction is acetate + ATP = acetyl phosphate + ADP. Its pathway is metabolic intermediate biosynthesis; acetyl-CoA biosynthesis; acetyl-CoA from acetate: step 1/2. Its function is as follows. Catalyzes the formation of acetyl phosphate from acetate and ATP. Can also catalyze the reverse reaction. In Dichelobacter nodosus (strain VCS1703A), this protein is Acetate kinase.